The sequence spans 53 residues: ATP synthase protein 8 (53 aa).

A helical membrane pass occupies residues 4 to 24; it reads MAPISWLLLFIIFSITFILFC.

Belongs to the ATPase protein 8 family. In terms of assembly, F-type ATPases have 2 components, CF(1) - the catalytic core - and CF(0) - the membrane proton channel.

Its subcellular location is the mitochondrion membrane. In terms of biological role, mitochondrial membrane ATP synthase (F(1)F(0) ATP synthase or Complex V) produces ATP from ADP in the presence of a proton gradient across the membrane which is generated by electron transport complexes of the respiratory chain. F-type ATPases consist of two structural domains, F(1) - containing the extramembraneous catalytic core and F(0) - containing the membrane proton channel, linked together by a central stalk and a peripheral stalk. During catalysis, ATP synthesis in the catalytic domain of F(1) is coupled via a rotary mechanism of the central stalk subunits to proton translocation. Part of the complex F(0) domain. Minor subunit located with subunit a in the membrane. This Drosophila sechellia (Fruit fly) protein is ATP synthase protein 8 (mt:ATPase8).